Reading from the N-terminus, the 553-residue chain is MTSAPIPDITATPAWDALRRHHDQIGNTHLRQFFADDPGRGRELTVSVGDLYIDYSKHRVTRETLALLIDLARTAHLEERRDQMFAGVHINTSEDRAVLHTALRLPRDAELVVDGQDVVTDVHAVLDAMGAFTDRLRSGEWTGATGKRISTVVNIGIGGSDLGPVMVYQALRHYADAGISARFVSNVDPADLIATLADLDPATTLFIVASKTFSTLETLTNATAARRWLTDALGDAAVSRHFVAVSTNKRLVDDFGINTDNMFGFWDWVGGRYSVDSAIGLSLMTVIGRDAFADFLAGFHIIDRHFATAPLESNAPVLLGLIGLWYSNFFGAQSRTVLPYSNDLSRFPAYLQQLTMESNGKSTRADGSPVSADTGEIFWGEPGTNGQHAFYQLLHQGTRLVPADFIGFAQPLDDLPTAEGTGSMHDLLMSNFFAQTQVLAFGKTAEEIAADGTPAHVVAHKVMPGNRPSTSILASRLTPSVLGQLIALYEHQVFTEGVVWGIDSFDQWGVELGKTQAKALLPVITGAGSPPPQSDSSTDGLVRRYRTERGRAG.

Catalysis depends on E357, which acts as the Proton donor. Residues H388 and K514 contribute to the active site. The disordered stretch occupies residues 524-553; that stretch reads ITGAGSPPPQSDSSTDGLVRRYRTERGRAG. The segment covering 541-553 has biased composition (basic and acidic residues); that stretch reads LVRRYRTERGRAG.

Belongs to the GPI family.

Its subcellular location is the cytoplasm. The enzyme catalyses alpha-D-glucose 6-phosphate = beta-D-fructose 6-phosphate. Its pathway is carbohydrate biosynthesis; gluconeogenesis. It functions in the pathway carbohydrate degradation; glycolysis; D-glyceraldehyde 3-phosphate and glycerone phosphate from D-glucose: step 2/4. In terms of biological role, catalyzes the reversible isomerization of glucose-6-phosphate to fructose-6-phosphate. The chain is Glucose-6-phosphate isomerase from Mycobacterium bovis (strain BCG / Tokyo 172 / ATCC 35737 / TMC 1019).